Here is a 291-residue protein sequence, read N- to C-terminus: 33 kDa chaperonin (291 aa).

2 disulfides stabilise this stretch: cysteine 235–cysteine 237 and cysteine 268–cysteine 271.

It belongs to the HSP33 family. Under oxidizing conditions two disulfide bonds are formed involving the reactive cysteines. Under reducing conditions zinc is bound to the reactive cysteines and the protein is inactive.

The protein resides in the cytoplasm. Functionally, redox regulated molecular chaperone. Protects both thermally unfolding and oxidatively damaged proteins from irreversible aggregation. Plays an important role in the bacterial defense system toward oxidative stress. This chain is 33 kDa chaperonin, found in Streptococcus agalactiae serotype Ia (strain ATCC 27591 / A909 / CDC SS700).